The primary structure comprises 403 residues: GPI-N-acetylgalactosamine transferase PGAP4 (403 aa).

The Cytoplasmic portion of the chain corresponds to Met1–Ser22. A helical membrane pass occupies residues Thr23–Cys43. The Lumenal segment spans residues His44–Pro259. Asn87 carries an N-linked (GalNAc...) asparagine glycan. Val109 contacts UDP-N-acetyl-alpha-D-galactosamine. Intrachain disulfides connect Cys132-Cys136 and Cys144-Cys194. A DXD motif motif is present at residues Glu211–Asp213. A helical membrane pass occupies residues Met260–Tyr280. Topologically, residues Met281–Pro287 are cytoplasmic. Residues Gly288–Val308 traverse the membrane as a helical segment. Residues Gly309–Leu403 are Lumenal-facing. Cys332 and Cys333 form a disulfide bridge. Residues Thr334, Pro335, and Lys362 each coordinate UDP-N-acetyl-alpha-D-galactosamine.

This sequence belongs to the PGAP4 family. In terms of processing, glycosylated.

The protein resides in the golgi apparatus membrane. In terms of biological role, golgi-resident glycosylphosphatidylinositol (GPI)-N-acetylgalactosamine transferase that catalyzes the N-acetyl-beta-D-galactosamine transfer from an UDP-N-acetyl-alpha-D-galactosamine to the 4-OH-position of the first mannose of the glycosylphosphatidylinositol (GPI) of a GPI-anchored protein (GPI-AP). This modification occurs after the fatty acid remodeling step of the GPI-anchor maturation. The protein is GPI-N-acetylgalactosamine transferase PGAP4 of Homo sapiens (Human).